Here is an 84-residue protein sequence, read N- to C-terminus: Small ribosomal subunit protein bS18 (84 aa).

Belongs to the bacterial ribosomal protein bS18 family. In terms of assembly, part of the 30S ribosomal subunit. Forms a tight heterodimer with protein bS6.

Binds as a heterodimer with protein bS6 to the central domain of the 16S rRNA, where it helps stabilize the platform of the 30S subunit. The protein is Small ribosomal subunit protein bS18 of Mycoplasma mobile (strain ATCC 43663 / 163K / NCTC 11711) (Mesomycoplasma mobile).